Reading from the N-terminus, the 91-residue chain is Small ribosomal subunit protein bS6 (91 aa).

The protein belongs to the bacterial ribosomal protein bS6 family.

In terms of biological role, binds together with bS18 to 16S ribosomal RNA. This Leptospira biflexa serovar Patoc (strain Patoc 1 / Ames) protein is Small ribosomal subunit protein bS6.